Here is a 447-residue protein sequence, read N- to C-terminus: Glutamyl-tRNA reductase (447 aa).

Substrate contacts are provided by residues 56–59 (TCNR), Ser-119, 124–126 (ETQ), and Gln-130. The active-site Nucleophile is the Cys-57. 201 to 206 (GLGEMS) contributes to the NADP(+) binding site.

Belongs to the glutamyl-tRNA reductase family. In terms of assembly, homodimer.

It carries out the reaction (S)-4-amino-5-oxopentanoate + tRNA(Glu) + NADP(+) = L-glutamyl-tRNA(Glu) + NADPH + H(+). The protein operates within porphyrin-containing compound metabolism; protoporphyrin-IX biosynthesis; 5-aminolevulinate from L-glutamyl-tRNA(Glu): step 1/2. Its function is as follows. Catalyzes the NADPH-dependent reduction of glutamyl-tRNA(Glu) to glutamate 1-semialdehyde (GSA). The protein is Glutamyl-tRNA reductase of Helicobacter acinonychis (strain Sheeba).